Here is a 1127-residue protein sequence, read N- to C-terminus: Structural protein MDM1 (1127 aa).

The PXA domain maps to 85–273; the sequence is NAQIGKELES…WNLRIVSLSQ (189 aa). Phosphoserine is present on residues S670, S673, and S692. Residues 705-762 are a coiled coil; the sequence is SNNFRDNIASLTISIDQIEKELELLRHLILKADLTNNQMQLKILKKSQRTLLKELEMK. A PX domain is found at 782-905; sequence TKIYIRSYFS…RFLTDPTPFK (124 aa).

The protein belongs to the sorting nexin family.

Its subcellular location is the cytoplasm. Its function is as follows. Essential for mitotic growth. Mediates organelle inheritance. The polypeptide is Structural protein MDM1 (MDM1) (Saccharomyces cerevisiae (strain ATCC 204508 / S288c) (Baker's yeast)).